The primary structure comprises 338 residues: SPbeta prophage-derived uncharacterized protein YonB (338 aa).

This is SPbeta prophage-derived uncharacterized protein YonB (yonB) from Bacillus subtilis (strain 168).